Consider the following 340-residue polypeptide: Anthranilate phosphoribosyltransferase (340 aa).

5-phospho-alpha-D-ribose 1-diphosphate-binding positions include Gly-79, 82 to 83, Thr-87, 89 to 92, 107 to 115, and Ser-119; these read GD, NIST, and KHGNRAVTG. Gly-79 is a binding site for anthranilate. Ser-91 is a binding site for Mg(2+). Residue Asn-110 coordinates anthranilate. Arg-165 is an anthranilate binding site. Residues Asp-224 and Glu-225 each contribute to the Mg(2+) site.

Belongs to the anthranilate phosphoribosyltransferase family. Homodimer. Mg(2+) is required as a cofactor.

The enzyme catalyses N-(5-phospho-beta-D-ribosyl)anthranilate + diphosphate = 5-phospho-alpha-D-ribose 1-diphosphate + anthranilate. The protein operates within amino-acid biosynthesis; L-tryptophan biosynthesis; L-tryptophan from chorismate: step 2/5. Catalyzes the transfer of the phosphoribosyl group of 5-phosphorylribose-1-pyrophosphate (PRPP) to anthranilate to yield N-(5'-phosphoribosyl)-anthranilate (PRA). This chain is Anthranilate phosphoribosyltransferase, found in Syntrophomonas wolfei subsp. wolfei (strain DSM 2245B / Goettingen).